The sequence spans 133 residues: UPF0102 protein Fnod_1509 (133 aa).

The protein belongs to the UPF0102 family.

In Fervidobacterium nodosum (strain ATCC 35602 / DSM 5306 / Rt17-B1), this protein is UPF0102 protein Fnod_1509.